The primary structure comprises 382 residues: Lactaldehyde reductase (382 aa).

NAD(+) contacts are provided by residues aspartate 38, asparagine 70, 97–98, 139–143, asparagine 150, lysine 161, and 180–184; these read GS, TTAGT, and MMDGM. Fe cation-binding residues include aspartate 195, histidine 199, histidine 262, and histidine 276.

The protein belongs to the iron-containing alcohol dehydrogenase family. As to quaternary structure, homodimer. Requires Fe cation as cofactor.

It carries out the reaction (R)-propane-1,2-diol + NAD(+) = (R)-lactaldehyde + NADH + H(+). It catalyses the reaction (S)-propane-1,2-diol + NAD(+) = (S)-lactaldehyde + NADH + H(+). It functions in the pathway carbohydrate degradation; L-fucose degradation. The sequence is that of Lactaldehyde reductase (fucO) from Escherichia coli O157:H7.